A 127-amino-acid polypeptide reads, in one-letter code: uncharacterized protein (127 aa).

A Phosphothreonine modification is found at Thr30. Residues 51 to 75 form a disordered region; it reads APTYEQVLYPPASQKKTSNSTSEES. A Phosphoserine modification is found at Ser63.

This is an uncharacterized protein from Mus musculus (Mouse).